The primary structure comprises 402 residues: Rubredoxin-oxygen oxidoreductase (402 aa).

The segment at 30-216 is zinc metallo-hydrolase; that stretch reads PMGTTYNAYL…KAIETLVGAG (187 aa). H79, E81, D83, H146, D165, and H226 together coordinate Fe cation. Positions 255-393 constitute a Flavodoxin-like domain; it reads VVIFYDSMWH…QLKTMAQTIA (139 aa).

This sequence in the N-terminal section; belongs to the zinc metallo-hydrolase group 3 family. In terms of assembly, homodimer. FMN serves as cofactor. It depends on Fe cation as a cofactor.

The protein operates within energy metabolism; electron transfer. In terms of biological role, catalyzes the four-electron reduction of one oxygen molecule to two water molecules. The sequence is that of Rubredoxin-oxygen oxidoreductase (roo) from Megalodesulfovibrio gigas (strain ATCC 19364 / DSM 1382 / NCIMB 9332 / VKM B-1759) (Desulfovibrio gigas).